The chain runs to 618 residues: Methionine--tRNA ligase (618 aa).

The 'HIGH' region signature appears at 12–22 (YYVNAEPHLGH). Zn(2+)-binding residues include Cys-127, Cys-130, Cys-144, and His-147. A 'KMSKS' region motif is present at residues 297–301 (KMSKT). Lys-300 is a binding site for ATP. Residues 518–618 (DFAKVELRVA…GEVPPGAVVK (101 aa)) form the tRNA-binding domain.

Belongs to the class-I aminoacyl-tRNA synthetase family. MetG type 2A subfamily. As to quaternary structure, homodimer. Zn(2+) is required as a cofactor.

It is found in the cytoplasm. The catalysed reaction is tRNA(Met) + L-methionine + ATP = L-methionyl-tRNA(Met) + AMP + diphosphate. Its function is as follows. Is required not only for elongation of protein synthesis but also for the initiation of all mRNA translation through initiator tRNA(fMet) aminoacylation. This Thermus thermophilus (strain ATCC 27634 / DSM 579 / HB8) protein is Methionine--tRNA ligase (metG).